The primary structure comprises 532 residues: Protein DETOXIFICATION 51 (532 aa).

Helical transmembrane passes span 65–85, 98–118, 142–162, 176–196, 208–228, 238–258, 290–310, 316–336, 358–378, 395–415, 439–459, and 461–481; these read FPIA…MFFL, LAIA…ALGM, VVFL…VGKI, AQTY…LHPI, PVTL…LFLV, VAVA…CYVW, VSVC…GLLV, VAAM…PSSL, LTAT…AAFA, ILQL…GNCP, AFYL…GIGF, and GLWV…MYVV.

This sequence belongs to the multi antimicrobial extrusion (MATE) (TC 2.A.66.1) family. As to expression, expressed in the meristematic regions. Mainly detected in tissues where cells were actively dividing, such as leaf primordia and young leaves, the junction between lateral root and the primary root, root cap, hydathodes, the junction between secondary inflorescence and the main inflorescence, young stamen and young siliques. Highly expressed at the junction between the hypocotyl and the root, and at the marginal areas of cotyledons and true leaves, coinciding with the locations of the hydathode. Also highly expressed at the basal regions of the newly emerged lateral roots. In the floral organs, mostly expressed at the style of the pistil.

The protein resides in the endosome membrane. It localises to the late endosome membrane. Functions as a multidrug and toxin extrusion transporter that negatively regulates plant disease resistance. Plays an important role in maintaining normal plant architecture, possibly by regulating local auxin biosynthesis. May act as a negative regulator of hypocotyl cell elongation in the light. The sequence is that of Protein DETOXIFICATION 51 from Arabidopsis thaliana (Mouse-ear cress).